A 304-amino-acid chain; its full sequence is Zinc carboxypeptidase (304 aa).

One can recognise a Peptidase M14 domain in the interval 1 to 294 (QYHTLPEIYS…DSVVTILKES (294 aa)). Zn(2+)-binding residues include H58 and E61. C125 and C148 form a disulfide bridge. Zn(2+) is bound at residue H184. The active-site Proton donor/acceptor is E259.

The protein belongs to the peptidase M14 family. Zn(2+) serves as cofactor. As to expression, gut specific.

It localises to the secreted. In terms of biological role, involved in the digestion of the blood meal. The sequence is that of Zinc carboxypeptidase from Simulium vittatum (Striped black fly).